Consider the following 92-residue polypeptide: uncharacterized protein (92 aa).

This is an uncharacterized protein from Treponema pallidum (strain Nichols).